The chain runs to 264 residues: CD320 antigen (264 aa).

Positions 1–28 are cleaved as a signal peptide; it reads MARCGAGRAAALGLVLRLLLGLRTGPEA. Residues 50 to 87 enclose the LDL-receptor class A 1 domain; that stretch reads SCPTDTFKCLTSGYCVPLSWRCDGDRDCSDGSDEEECR. Intrachain disulfides connect Cys51–Cys64, Cys58–Cys77, and Cys71–Cys86. Ca(2+) contacts are provided by Trp69, Asp72, Asp74, Asp76, Asp82, and Glu83. An N-linked (GlcNAc...) asparagine glycan is attached at Asn122. One can recognise an LDL-receptor class A 2 domain in the interval 127 to 164; the sequence is PCQEGELRCILDDVCIPHTWRCDGHPDCPDSSDELSCD. 3 cysteine pairs are disulfide-bonded: Cys128-Cys141, Cys135-Cys154, and Cys148-Cys163. Trp146, Asp149, His151, Asp153, Asp159, and Glu160 together coordinate Ca(2+). A glycan (N-linked (GlcNAc...) asparagine) is linked at Asn195. A helical transmembrane segment spans residues 213–233; the sequence is VIAAAGVLSAILVSATILILL.

In terms of assembly, interacts (via LDL-receptor class A domains) with TCN2.

It localises to the cell membrane. Its function is as follows. Receptor for transcobalamin saturated with cobalamin (TCbl). Plays an important role in cobalamin uptake. Plasma membrane protein that is expressed on follicular dendritic cells (FDC) and mediates interaction with germinal center B cells. Functions as a costimulator to promote B cell responses to antigenic stimuli; promotes B cell differentiation and proliferation. Germinal center-B (GC-B) cells differentiate into memory B-cells and plasma cells (PC) through interaction with T-cells and follicular dendritic cells (FDC). CD320 augments the proliferation of PC precursors generated by IL-10. The sequence is that of CD320 antigen (Cd320) from Rattus norvegicus (Rat).